We begin with the raw amino-acid sequence, 692 residues long: Protein arginine N-methyltransferase 7 (692 aa).

2 consecutive SAM-dependent MTase PRMT-type domains span residues 14 to 345 and 358 to 684; these read SVEW…YCVW and RVRQ…IIME. At Arg32 the chain carries Omega-N-methylarginine. Catalysis depends on residues Glu144 and Glu153.

It belongs to the class I-like SAM-binding methyltransferase superfamily. Protein arginine N-methyltransferase family. PRMT7 subfamily. In terms of assembly, homodimer and heterodimer. Interacts with CTCFL. Interacts with PRMT5 and SNRPD3.

The protein localises to the cytoplasm. It localises to the cytosol. It is found in the nucleus. The catalysed reaction is L-arginyl-[protein] + S-adenosyl-L-methionine = N(omega)-methyl-L-arginyl-[protein] + S-adenosyl-L-homocysteine + H(+). In terms of biological role, arginine methyltransferase that can both catalyze the formation of omega-N monomethylarginine (MMA) and symmetrical dimethylarginine (sDMA), with a preference for the formation of MMA. Specifically mediates the symmetrical dimethylation of arginine residues in the small nuclear ribonucleoproteins Sm D1 (SNRPD1) and Sm D3 (SNRPD3); such methylation being required for the assembly and biogenesis of snRNP core particles. Specifically mediates the symmetric dimethylation of histone H4 'Arg-3' to form H4R3me2s. Plays a role in gene imprinting by being recruited by CTCFL at the H19 imprinted control region (ICR) and methylating histone H4 to form H4R3me2s, possibly leading to recruit DNA methyltransferases at these sites. May also play a role in embryonic stem cell (ESC) pluripotency. Also able to mediate the arginine methylation of histone H2A and myelin basic protein (MBP) in vitro; the relevance of such results is however unclear in vivo. The polypeptide is Protein arginine N-methyltransferase 7 (PRMT7) (Homo sapiens (Human)).